A 545-amino-acid chain; its full sequence is CTP synthase (545 aa).

Residues 1–266 are amidoligase domain; sequence MATNYIFVTG…DSFVCDRFRL (266 aa). Position 14 (serine 14) interacts with CTP. Residue serine 14 coordinates UTP. Residues 15 to 20 and aspartate 72 each bind ATP; that span reads SLGKGI. Residues aspartate 72 and glutamate 140 each coordinate Mg(2+). CTP contacts are provided by residues 147-149, 187-192, and lysine 223; these read DIE and KTKPTQ. Residues 187–192 and lysine 223 contribute to the UTP site; that span reads KTKPTQ. Position 239–241 (239–241) interacts with ATP; that stretch reads KDV. The Glutamine amidotransferase type-1 domain maps to 291 to 542; sequence TIGMVGKYVE…VAAAKAYQDS (252 aa). Glycine 352 contributes to the L-glutamine binding site. Residue cysteine 379 is the Nucleophile; for glutamine hydrolysis of the active site. Residues 380–383, glutamate 403, and arginine 470 contribute to the L-glutamine site; that span reads LGMQ. Catalysis depends on residues histidine 515 and glutamate 517.

The protein belongs to the CTP synthase family. In terms of assembly, homotetramer.

The catalysed reaction is UTP + L-glutamine + ATP + H2O = CTP + L-glutamate + ADP + phosphate + 2 H(+). It carries out the reaction L-glutamine + H2O = L-glutamate + NH4(+). The enzyme catalyses UTP + NH4(+) + ATP = CTP + ADP + phosphate + 2 H(+). It functions in the pathway pyrimidine metabolism; CTP biosynthesis via de novo pathway; CTP from UDP: step 2/2. Its activity is regulated as follows. Allosterically activated by GTP, when glutamine is the substrate; GTP has no effect on the reaction when ammonia is the substrate. The allosteric effector GTP functions by stabilizing the protein conformation that binds the tetrahedral intermediate(s) formed during glutamine hydrolysis. Inhibited by the product CTP, via allosteric rather than competitive inhibition. Functionally, catalyzes the ATP-dependent amination of UTP to CTP with either L-glutamine or ammonia as the source of nitrogen. Regulates intracellular CTP levels through interactions with the four ribonucleotide triphosphates. This Haemophilus ducreyi (strain 35000HP / ATCC 700724) protein is CTP synthase.